Consider the following 469-residue polypeptide: 3-isopropylmalate dehydratase large subunit (469 aa).

Residues Cys349, Cys409, and Cys412 each contribute to the [4Fe-4S] cluster site. Residues 424–443 form a disordered region; it reads QISASSSNRNFKGRQGSPSG.

Belongs to the aconitase/IPM isomerase family. LeuC type 1 subfamily. As to quaternary structure, heterodimer of LeuC and LeuD. [4Fe-4S] cluster serves as cofactor.

It carries out the reaction (2R,3S)-3-isopropylmalate = (2S)-2-isopropylmalate. The protein operates within amino-acid biosynthesis; L-leucine biosynthesis; L-leucine from 3-methyl-2-oxobutanoate: step 2/4. Catalyzes the isomerization between 2-isopropylmalate and 3-isopropylmalate, via the formation of 2-isopropylmaleate. This Thermosynechococcus vestitus (strain NIES-2133 / IAM M-273 / BP-1) protein is 3-isopropylmalate dehydratase large subunit.